We begin with the raw amino-acid sequence, 1196 residues long: Contactin rig-6 (1196 aa).

Positions 1-19 are cleaved as a signal peptide; that stretch reads MMMLIRCISIFLLFGFVNA. N-linked (GlcNAc...) asparagine glycans are attached at residues asparagine 100 and asparagine 195. Ig-like C2-type domains are found at residues 144 to 225 and 232 to 319; these read PQIS…ARNS and PPIL…CSLS. 2 cysteine pairs are disulfide-bonded: cysteine 169/cysteine 220 and cysteine 263/cysteine 316. A glycan (N-linked (GlcNAc...) asparagine) is linked at asparagine 343. Ig-like C2-type domains lie at 355-438, 441-533, 539-626, and 631-730; these read PQIF…VKLR, PSIL…ALLT, PVFP…VQLI, and PSIK…EFVT. Cysteine 372 and cysteine 420 form a disulfide bridge. N-linked (GlcNAc...) asparagine glycosylation occurs at asparagine 457. Disulfide bonds link cysteine 462–cysteine 517 and cysteine 562–cysteine 610. N-linked (GlcNAc...) asparagine glycosylation is present at asparagine 644. A disulfide bond links cysteine 653 and cysteine 718. 4 Fibronectin type-III domains span residues 736–844, 849–961, 963–1057, and 1064–1168; these read SPIA…TAPG, TIDN…SHGE, KKVS…TKQH, and LIGK…LGSP. 8 N-linked (GlcNAc...) asparagine glycosylation sites follow: asparagine 895, asparagine 925, asparagine 945, asparagine 974, asparagine 979, asparagine 986, asparagine 1002, and asparagine 1092. Residues 1174–1194 form a helical membrane-spanning segment; it reads TTGSSDVPIPSLLLLLLLLLW. Serine 1177 carries the GPI-anchor amidated serine lipid modification. A propeptide spans 1178-1196 (removed in mature form); it reads SDVPIPSLLLLLLLLLWRL.

Belongs to the immunoglobulin superfamily. Contactin family. As to quaternary structure, interacts with sax-7; the interaction establishes synaptic connections between neurons. Expressed in neurons including the I1 and I3 pharyngeal interneurons, NSM and VNC motor neurons, HSN and CAN neurons, the ALM and PLM touch receptor neurons and other unidentified head neurons. Expressed in AVG interneurons. Also expressed in somatic muscles, the excretory canal, the excretory cell and the hypodermis.

Its subcellular location is the cell membrane. The protein resides in the perikaryon. It is found in the cell projection. It localises to the axon. The protein localises to the synapse. Its subcellular location is the cytoplasm. Its function is as follows. Probable cell adhesion protein involved in patterning of the nervous system, playing a role in ALM and PLM touch receptor axon growth and VNC axon navigation. By associating with the transmembrane protein sax-7, mediates axonal interactions to establish synaptic connections between the AVG interneuron and the two PHC sensory neurons. Also required for non-neuronal cell migration in the excretory canal, regulating excretory canal elongation and excretory cell morphogenesis. Plays a role in regulating male mating behavior. The protein is Contactin rig-6 of Caenorhabditis elegans.